The following is a 577-amino-acid chain: Torulene dioxygenase (577 aa).

Residues 1-20 (MALNGPGVYHRTREHEQEDA) are disordered. Fe(2+) contacts are provided by H239, H291, H361, and H570.

Belongs to the carotenoid oxygenase family. Requires Fe(2+) as cofactor.

It is found in the cytoplasm. The protein localises to the cytosol. The enzyme catalyses torulene + O2 = 4'-apo-beta-carotenal + 3-methyl-2-butenal. It functions in the pathway carotenoid biosynthesis. Torulene dioxygenase; part of pathway that mediates the biosynthesis of neurosporaxanthin, a carboxylic apocarotenoid acting as an essential protective pigments and leading to orange pigmentation. CarT mediates the cleavage of torulene into beta-apo-4'-carotenal, the aldehyde corresponding to the acidic neurosporaxanthin. Is also active on other monocyclic synthetic substrates such as beta-apo-8'-carotenal and beta-apo-10'-carotenal to produce beta-apo-14'-carotenal and retinal(beta-apo-15'-carotenal), respectively. Neurosporaxanthin is synthesized from geranyl-geranyl pyrophosphate (GGPP) through several enzymatic activities. Phytoene synthase activity performed by the bifunctional enzyme carAR first produces phytoene from geranyl-geranyl pyrophosphate (GGPP). The phytoene dehydrogenase carB then introduces 4 desaturations to lead to lycopene which is substrate of the carotene cyclase activity of carAR that leads to the production of gamma-carotene. CarB then performs a 5th desaturation reaction to yield torulene. Torulene is the substrate of the dioxidase carT that breaks the molecule, removing five carbon atoms to yield beta-apo-4'-carotenal, whereas the aldehyde dehydrogenase carD mediates the last step by converting beta-apo-4'-carotenal into neurosporaxanthin. The chain is Torulene dioxygenase from Gibberella fujikuroi (strain CBS 195.34 / IMI 58289 / NRRL A-6831) (Bakanae and foot rot disease fungus).